The chain runs to 173 residues: Alpha-crystallin A chain (173 aa).

An N-acetylmethionine modification is found at Met-1. The interval 1-63 (MDIAIQHPWF…RTVLDSGISE (63 aa)) is required for complex formation with BFSP1 and BFSP2. Gln-6 carries the post-translational modification Deamidated glutamine; partial. The residue at position 45 (Ser-45) is a Phosphoserine. The residue at position 50 (Gln-50) is a Deamidated glutamine; partial. The sHSP domain maps to 52–162 (LFRTVLDSGI…GHSERAIPVS (111 aa)). At Lys-70 the chain carries N6-acetyllysine. The residue at position 90 (Gln-90) is a Deamidated glutamine; partial. Lys-99 bears the N6-acetyllysine mark. Position 100 (His-100) interacts with Zn(2+). Residue Asn-101 is modified to Deamidated asparagine; partial. Zn(2+) is bound by residues Glu-102 and His-107. Residue Ser-122 is modified to Phosphoserine. Asn-123 is modified (deamidated asparagine; partial). The segment at 144-173 (PKVPSGMDAGHSERAIPVSREEKPSSAPSS) is disordered. Over residues 153-167 (GHSERAIPVSREEKP) the composition is skewed to basic and acidic residues. His-154 serves as a coordination point for Zn(2+). Ser-162 is a glycosylation site (O-linked (GlcNAc) serine).

The protein belongs to the small heat shock protein (HSP20) family. As to quaternary structure, heteromer composed of three CRYAA and one CRYAB subunits. Inter-subunit bridging via zinc ions enhances stability, which is crucial as there is no protein turn over in the lens. Can also form homodimers and homotetramers (dimers of dimers) which serve as the building blocks of homooligomers. Within homooligomers, the zinc-binding motif is created from residues of 3 different molecules. His-100 and Glu-102 from one molecule are ligands of the zinc ion, and His-107 and His-154 residues from additional molecules complete the site with tetrahedral coordination geometry. Part of a complex required for lens intermediate filament formation composed of BFSP1, BFSP2 and CRYAA. Acetylation at Lys-70 may increase chaperone activity. Post-translationally, undergoes age-dependent proteolytical cleavage at the C-terminus.

Its subcellular location is the cytoplasm. It is found in the nucleus. Its function is as follows. Contributes to the transparency and refractive index of the lens. Acts as a chaperone, preventing aggregation of various proteins under a wide range of stress conditions. Required for the correct formation of lens intermediate filaments as part of a complex composed of BFSP1, BFSP2 and CRYAA. The protein is Alpha-crystallin A chain (CRYAA) of Balaenoptera acutorostrata (Common minke whale).